The sequence spans 1832 residues: Zinc finger protein 646 (1832 aa).

8 C2H2-type zinc fingers span residues 8–31 (LSCS…ELLH), 48–70 (YRCQ…RRTH), 75–97 (FPCT…MRTH), 239–261 (YKCS…RQSH), 266–288 (YPCA…SRLH), 294–316 (YHCP…QQSH), 374–396 (FRCG…RKSH), and 401–424 (YPCS…RAHH). A disordered region spans residues 26 to 47 (HRELLHPSPNQDSEEADSIPRP). Basic residues predominate over residues 94-108 (MRTHAPEGRRRHRPP). The interval 94–200 (MRTHAPEGRR…TNSARAPPLP (107 aa)) is disordered. The span at 313 to 329 (QQSHEGERQEPRWEEKG) shows a compositional bias: basic and acidic residues. The tract at residues 313 to 346 (QQSHEGERQEPRWEEKGMPTTNGHTDESSQDQLP) is disordered. K451 is covalently cross-linked (Glycyl lysine isopeptide (Lys-Gly) (interchain with G-Cter in SUMO2)). 2 consecutive C2H2-type zinc fingers follow at residues 465 to 487 (YKCS…RHSH) and 492 to 514 (YQCS…VRVH). Residues K534 and K557 each participate in a glycyl lysine isopeptide (Lys-Gly) (interchain with G-Cter in SUMO2) cross-link. The C2H2-type 11 zinc-finger motif lies at 575–597 (HICSICGLLFEDAESLERHGLTH). S612 carries the phosphoserine modification. C2H2-type zinc fingers lie at residues 617-639 (FACR…RQTH) and 644-666 (FSCG…LRRH). Residues 660–810 (KNHLRRHSRR…QPNSSSHSAN (151 aa)) are disordered. Residues 661-678 (NHLRRHSRRRSRRHRKRA) show a composition bias toward basic residues. K688 participates in a covalent cross-link: Glycyl lysine isopeptide (Lys-Gly) (interchain with G-Cter in SUMO2). Positions 735 to 767 (EGDKCGLERDETHFQGDKESGGTGEGLERKDAS) are enriched in basic and acidic residues. A compositionally biased stretch (polar residues) spans 798-810 (ATGQPNSSSHSAN). 3 C2H2-type zinc fingers span residues 821–843 (HTCS…RPCH), 848–870 (YQCS…FQNH), and 881–904 (FLCC…RQAH). The interval 901 to 931 (RQAHSSSGMTEGSEEEGEEEGVAEAAPARSP) is disordered. Acidic residues predominate over residues 912–922 (GSEEEGEEEGV). Residues 958 to 980 (HICGCCGQTYDDLGSLERHHQSQ) form a C2H2-type 17; degenerate zinc finger. C2H2-type zinc fingers lie at residues 1052-1074 (FRCN…RKIH) and 1079-1101 (FLCP…LRNH). The disordered stretch occupies residues 1103–1148 (RCKGSEPQVGPIPEAAGSSELQVGPIPEGGSNKPQHMAEEGPGQAE). Glycyl lysine isopeptide (Lys-Gly) (interchain with G-Cter in SUMO2) cross-links involve residues K1157, K1168, and K1178. C2H2-type zinc fingers lie at residues 1203 to 1225 (FSCE…RQSH), 1230 to 1252 (FGCQ…RRIH), 1258 to 1280 (FRCS…QRVH), 1299 to 1321 (FRCG…RRSH), 1326 to 1348 (YSCP…QRLH), and 1364 to 1386 (VRCA…LREH). The tract at residues 1274–1294 (ASHQRVHMERRGGGGTRKATR) is disordered. Disordered regions lie at residues 1377-1481 (GSLE…WVPQ) and 1509-1529 (TLSH…QPGS). A compositionally biased stretch (basic and acidic residues) spans 1378–1393 (SLERHLREHEETEREP). Positions 1406–1417 (SEANLTGSQGLE) are enriched in polar residues. The span at 1427 to 1438 (PHLEDGVPRPGE) shows a compositional bias: basic and acidic residues. Over residues 1460 to 1475 (GKAGGWPVGGGLGNHS) the composition is skewed to gly residues. 6 consecutive C2H2-type zinc fingers follow at residues 1557–1579 (HYCL…SHNH), 1585–1607 (FACP…LQAH), 1677–1699 (FRCT…QKAH), 1704–1726 (YPCS…SRTH), 1732–1754 (HCCS…GRVH), and 1761–1783 (FTCP…QQQH). The segment at 1606 to 1672 (AHARGHSQVP…QAVTSMAAED (67 aa)) is disordered. The tract at residues 1781–1832 (QQHQEEWTVAGSGAPVAPVTGRGDLPLPPPPTPTTPLLDPSPQWPADLSFSL) is disordered.

It belongs to the krueppel C2H2-type zinc-finger protein family.

Its subcellular location is the nucleus. In terms of biological role, may be involved in transcriptional regulation. This chain is Zinc finger protein 646, found in Homo sapiens (Human).